Reading from the N-terminus, the 249-residue chain is 5'-nucleotidase SurE (249 aa).

Positions 8, 9, 39, and 91 each coordinate a divalent metal cation.

This sequence belongs to the SurE nucleotidase family. It depends on a divalent metal cation as a cofactor.

It is found in the cytoplasm. It carries out the reaction a ribonucleoside 5'-phosphate + H2O = a ribonucleoside + phosphate. Functionally, nucleotidase that shows phosphatase activity on nucleoside 5'-monophosphates. This is 5'-nucleotidase SurE from Pseudomonas putida (strain ATCC 47054 / DSM 6125 / CFBP 8728 / NCIMB 11950 / KT2440).